We begin with the raw amino-acid sequence, 202 residues long: MATLIYVDKENGEPGTRVAAKDGLKLGSAPSIKALDGRSQVSTPRFGKTFDAPPALPKATRKALGTVNRATEKSVKTKGPLKQKQPSFSAKKMTEKTVKAKSSVPASDDAYPEIEKFFPFNPLDFESFDLPEEHQIAHLPLSGVPLMILDEERELEKLFQLGPPSPVRMPSPPWESNLLQSPSSILSTLDVELPPVCCDIDI.

Alanine 2 is subject to N-acetylalanine. Positions leucine 35 to threonine 94 are disordered. The D-box signature appears at arginine 61 to leucine 64. 2 short sequence motifs (TEK-box) span residues threonine 71–lysine 73 and threonine 94–lysine 96. The SH3-binding motif lies at proline 163–proline 173. At serine 165 the chain carries Phosphoserine; by CDK1.

Belongs to the securin family. Interacts with RPS10 and DNAJA1. Interacts with the caspase-like ESPL1, and prevents its protease activity probably by covering its active site. Interacts with TP53 and blocks its activity probably by blocking its binding to DNA. Interacts with the Ku 70 kDa subunit of ds-DNA kinase. Interacts with PTTG1IP. Phosphorylated at Ser-165 by CDK1 during mitosis. In terms of processing, phosphorylated in vitro by ds-DNA kinase. Post-translationally, ubiquitinated through 'Lys-11' linkage of ubiquitin moieties by the anaphase promoting complex (APC) at the onset of anaphase, conducting to its degradation. 'Lys-11'-linked ubiquitination is mediated by the E2 ligase UBE2C/UBCH10.

It is found in the cytoplasm. The protein localises to the nucleus. In terms of biological role, regulatory protein, which plays a central role in chromosome stability, in the p53/TP53 pathway, and DNA repair. Probably acts by blocking the action of key proteins. During the mitosis, it blocks Separase/ESPL1 function, preventing the proteolysis of the cohesin complex and the subsequent segregation of the chromosomes. At the onset of anaphase, it is ubiquitinated, conducting to its destruction and to the liberation of ESPL1. Its function is however not limited to a blocking activity, since it is required to activate ESPL1. Negatively regulates the transcriptional activity and related apoptosis activity of TP53. The negative regulation of TP53 may explain the strong transforming capability of the protein when it is overexpressed. May also play a role in DNA repair via its interaction with Ku, possibly by connecting DNA damage-response pathways with sister chromatid separation. This Gorilla gorilla gorilla (Western lowland gorilla) protein is Securin (PTTG1).